A 162-amino-acid polypeptide reads, in one-letter code: Gas vesicle protein I (162 aa).

Residues 1-162 are disordered; the sequence is MTGKQHQKHE…AERQRGGADE (162 aa). 2 stretches are compositionally biased toward basic and acidic residues: residues 22–37 and 47–64; these read INRD…QREK and RQSE…HDTQ. Composition is skewed to polar residues over residues 65–74 and 81–110; these read SETQRGTQSK and TGGT…SHST. 2 stretches are compositionally biased toward basic and acidic residues: residues 122 to 142 and 151 to 162; these read ARER…EDKS and PKAERQRGGADE.

This sequence belongs to the gas vesicle GvpI family. GvpF to GvpM interact with each other in vitro, and may form multi-subunit complex(es). Interacts with GvpC and GvpO.

Its subcellular location is the gas vesicle. Proteins GvpF to GvpM might be involved in nucleating gas vesicle formation. A minor component of the gas vesicle. Gas vesicles are hollow, gas filled proteinaceous nanostructures found in some microorganisms. They allow positioning of halobacteria at the optimal depth for growth in the poorly aerated, shallow brine pools of their habitat. In terms of biological role, expression of a 9.5 kb mc-vac DNA fragment containing 2 divergently transcribed regions (gvpD-gvpE-gvpF-gvpG-gvpH-gvpI-gvpJ-gvpK-gvpL-gvpM and gvpA-gvpC-gvpN-gvpO) allows H.volcanii to produce gas vesicles. This chain is Gas vesicle protein I, found in Haloferax mediterranei (strain ATCC 33500 / DSM 1411 / JCM 8866 / NBRC 14739 / NCIMB 2177 / R-4) (Halobacterium mediterranei).